We begin with the raw amino-acid sequence, 232 residues long: Large ribosomal subunit protein uL1 (232 aa).

Belongs to the universal ribosomal protein uL1 family. As to quaternary structure, part of the 50S ribosomal subunit.

Binds directly to 23S rRNA. The L1 stalk is quite mobile in the ribosome, and is involved in E site tRNA release. In terms of biological role, protein L1 is also a translational repressor protein, it controls the translation of the L11 operon by binding to its mRNA. The sequence is that of Large ribosomal subunit protein uL1 from Sinorhizobium medicae (strain WSM419) (Ensifer medicae).